Here is a 214-residue protein sequence, read N- to C-terminus: Large ribosomal subunit protein uL3 (214 aa).

Residues 132-145 (SNRASHGNSVTTRA) are compositionally biased toward polar residues. Residues 132 to 155 (SNRASHGNSVTTRAPGSIGQAQDP) are disordered. Glutamine 153 is modified (N5-methylglutamine).

Belongs to the universal ribosomal protein uL3 family. In terms of assembly, part of the 50S ribosomal subunit. Forms a cluster with proteins L14 and L19. In terms of processing, methylated by PrmB.

Functionally, one of the primary rRNA binding proteins, it binds directly near the 3'-end of the 23S rRNA, where it nucleates assembly of the 50S subunit. This is Large ribosomal subunit protein uL3 from Laribacter hongkongensis (strain HLHK9).